Consider the following 209-residue polypeptide: Transcription elongation factor A protein-like 4 (209 aa).

Methionine 1 bears the N-acetylmethionine mark. The interval 1–125 (MEKLYNENEG…VPRKAKRKTN (125 aa)) is disordered. Residues 25–96 (QDERKPEVAC…GSEREGKPES (72 aa)) show a composition bias toward basic and acidic residues. Phosphoserine occurs at positions 88 and 96.

This sequence belongs to the TFS-II family. TFA subfamily.

It is found in the nucleus. Functionally, may be involved in transcriptional regulation. This Pongo abelii (Sumatran orangutan) protein is Transcription elongation factor A protein-like 4 (TCEAL4).